A 210-amino-acid polypeptide reads, in one-letter code: Transcriptional regulator MxiE (210 aa).

The HTH araC/xylS-type domain occupies 99–199; sequence YHLVLYLLRT…GFSARELSNI (101 aa). 2 DNA-binding regions (H-T-H motif) span residues 118–139 and 166–189; these read KSLT…RKAL and ITSA…KTRL.

Necessary for the secretion of ipa invasins. Probable transcriptional regulatory protein. This chain is Transcriptional regulator MxiE (mxiE), found in Shigella flexneri.